Reading from the N-terminus, the 190-residue chain is MAAGELEGGKPLSGLLNALAQDTFHGYPGITEELLRSQLYPEVPPEEFRPFLAKMRGILKSIASADMDFNQLEAFLTAQTKKQGGITSDQAAVISKFWKSHKTKIRESLMNQSRWNSGLRGLSWRVDGKSQSRHSAQIHTPVAIIELELGKYGQESEFLCLEFDEVKVNQILKTLSEVEESISTLISQPN.

Alanine 2 is subject to N-acetylalanine. A sufficient for interaction with SLC12A2 region spans residues 2–123; it reads AAGELEGGKP…RWNSGLRGLS (122 aa). Residues histidine 101, methionine 110, and histidine 134 each coordinate Cu cation. The region spanning 118–186 is the COMM domain; it reads GLRGLSWRVD…EVEESISTLI (69 aa). The tract at residues 125 to 190 is required for binding to PtdIns(4,5)P2; it reads RVDGKSQSRH…SISTLISQPN (66 aa).

The protein belongs to the COMM domain-containing protein 1 family. As to quaternary structure, component of the commander complex consisting of the CCC subcomplex and the retriever subcomplex. Component of the CCC (COMMD/CCDC22/CCDC93) subcomplex consisting of COMMD1, COMMD2, COMMD3, COMMD4, COMMD5, COMMD6, COMMD7, COMMD8, COMMD9, COMMD10, CCDC22 and CCDC93; within the complex forms a heterodimer with COMMD6. Interacts with VPS35L; the interaction associates the CCC complex with the retriever complex. Identified in a complex with an E3 ubiquitin ligase complex composed of TCEB1/elongin C, CUL2, SOCS1 and RBX1; in the complex interacts directly with SOCS1 and CUL2. Identified in a complex with NF-kappa-B. Interacts directly with SLC12A2. Interacts directly with ATP7B (via the N-terminal region). Interacts with ATP7A. Interacts with FAM107A; this interaction stabilizes COMMD1 in the nucleus. Interacts with CCS, CDKN2A, RELA, REL, RELB, NFKB1/p105, NFKB2/p100, NFKBIB, SCNN1D, SCNN1B, CFTR, CLU, SGK1, AKT1, CUL1, CUL2, CUL3, CUL4A, CUL4B, CUL5, CUL7, HIF1A. In terms of processing, acetylated by EP300 ina stimuli-specific manner; protecting it from XIAP-mediated proteasomal degradation and required for interaction with RElA in response to stress. Ubiquitinated; undergoes both 'Lys-63'- and 'Lys-48'-linked polyubiquitination. Ubiquitinated by XIAP, leading to its proteasomal degradation. In terms of tissue distribution, ubiquitous. Highest expression in the liver, with lower expression in brain, lung, placenta, pancreas, small intestine, heart, skeletal muscle, kidney and placenta. Down-regulated in cancer tissues.

It localises to the nucleus. Its subcellular location is the cytoplasm. The protein localises to the endosome membrane. The protein resides in the cytoplasmic vesicle. It is found in the early endosome. It localises to the recycling endosome. In terms of biological role, scaffold protein in the commander complex that is essential for endosomal recycling of transmembrane cargos; the commander complex is composed of the CCC subcomplex and the retriever subcomplex. Can modulate activity of cullin-RING E3 ubiquitin ligase (CRL) complexes by displacing CAND1; in vitro promotes CRL E3 activity and dissociates CAND1 from CUL1 and CUL2. Promotes ubiquitination of NF-kappa-B subunit RELA and its subsequent proteasomal degradation. Down-regulates NF-kappa-B activity. Involved in the regulation of membrane expression and ubiquitination of SLC12A2. Modulates Na(+) transport in epithelial cells by regulation of apical cell surface expression of amiloride-sensitive sodium channel (ENaC) subunits and by promoting their ubiquitination presumably involving NEDD4L. Promotes the localization of SCNN1D to recycling endosomes. Promotes CFTR cell surface expression through regulation of its ubiquitination. Down-regulates SOD1 activity by interfering with its homodimerization. Plays a role in copper ion homeostasis. Involved in copper-dependent ATP7A trafficking between the trans-Golgi network and vesicles in the cell periphery; the function is proposed to depend on its association within the CCC complex and cooperation with the WASH complex on early endosomes. Can bind one copper ion per monomer. May function to facilitate biliary copper excretion within hepatocytes. Binds to phosphatidylinositol 4,5-bisphosphate (PtdIns(4,5)P2). Involved in the regulation of HIF1A-mediated transcription; competes with ARNT/Hif-1-beta for binding to HIF1A resulting in decreased DNA binding and impaired transcriptional activation by HIF-1. Negatively regulates neuroblastoma G1/S phase cell cycle progression and cell proliferation by stimulating ubiquitination of NF-kappa-B subunit RELA and NF-kappa-B degradation in a FAM107A- and actin-dependent manner. The protein is COMM domain-containing protein 1 (COMMD1) of Homo sapiens (Human).